Consider the following 450-residue polypeptide: Cysteine protease ATG4C (450 aa).

C112 serves as the catalytic Nucleophile. Residues D336 and H338 contribute to the active site.

Belongs to the peptidase C54 family.

Its subcellular location is the cytoplasm. The catalysed reaction is [protein]-C-terminal L-amino acid-glycyl-phosphatidylethanolamide + H2O = [protein]-C-terminal L-amino acid-glycine + a 1,2-diacyl-sn-glycero-3-phosphoethanolamine. Its function is as follows. Cysteine protease that plays a key role in autophagy by mediating both proteolytic activation and delipidation of ATG8 family proteins. The protease activity is required for proteolytic activation of ATG8 family proteins: cleaves the C-terminal amino acid of ATG8 proteins to reveal a C-terminal glycine. Exposure of the glycine at the C-terminus is essential for ATG8 proteins conjugation to phosphatidylethanolamine (PE) and insertion to membranes, which is necessary for autophagy. In addition to the protease activity, also mediates delipidation of ATG8 family proteins. Catalyzes delipidation of PE-conjugated forms of ATG8 proteins during macroautophagy. The protein is Cysteine protease ATG4C of Xenopus tropicalis (Western clawed frog).